Consider the following 380-residue polypeptide: Kappa-type opioid receptor (380 aa).

At 1-57 the chain is on the extracellular side; the sequence is MESPIQIFRGEPGPTCAPSACLLPNSSSWFPNWAESDSNGSVGSEDQQLEPAHISPA. Asn-25 and Asn-39 each carry an N-linked (GlcNAc...) asparagine glycan. A helical membrane pass occupies residues 58–85; it reads IPVIITAVYSVVFVVGLVGNSLVMFVII. Topologically, residues 86-95 are cytoplasmic; the sequence is RYTKMKTATN. Residues 96–119 traverse the membrane as a helical segment; the sequence is IYIFNLALADALVTTTMPFQSAVY. The Extracellular segment spans residues 120 to 132; that stretch reads LMNSWPFGDVLCK. Cys-131 and Cys-210 form a disulfide bridge. Residues 133-154 traverse the membrane as a helical segment; that stretch reads IVISIDYYNMFTSIFTLTMMSV. Topologically, residues 155–173 are cytoplasmic; that stretch reads DRYIAVCHPVKALDFRTPL. Residues 174–196 traverse the membrane as a helical segment; the sequence is KAKIINICIWLLASSVGISAIVL. The Extracellular segment spans residues 197–222; sequence GGTKVREDVDVIECSLQFPDDEYSWW. A helical membrane pass occupies residues 223 to 247; it reads DLFMKICVFVFAFVIPVLIIIVCYT. Residues 248–274 lie on the Cytoplasmic side of the membrane; that stretch reads LMILRLKSVRLLSGSREKDRNLRRITK. Residues 275–296 traverse the membrane as a helical segment; that stretch reads LVLVVVAVFIICWTPIHIFILV. Residues 297-311 lie on the Extracellular side of the membrane; sequence EALGSTSHSTAVLSS. Residues 312 to 333 form a helical membrane-spanning segment; that stretch reads YYFCIALGYTNSSLNPVLYAFL. The Cytoplasmic segment spans residues 334 to 380; the sequence is DENFKRCFRDFCFPIKMRMERQSTNRVRNTVQDPASMRDVGGMNKPV. Cys-345 is lipidated: S-palmitoyl cysteine.

Belongs to the G-protein coupled receptor 1 family. As to quaternary structure, interacts with NHERF1. Interacts with GABARAPL1.

It localises to the cell membrane. Functionally, G-protein coupled opioid receptor that functions as a receptor for endogenous alpha-neoendorphins and dynorphins, but has low affinity for beta-endorphins. Also functions as a receptor for various synthetic opioids and for the psychoactive diterpene salvinorin A. Ligand binding causes a conformation change that triggers signaling via guanine nucleotide-binding proteins (G proteins) and modulates the activity of down-stream effectors, such as adenylate cyclase. Signaling leads to the inhibition of adenylate cyclase activity. Inhibits neurotransmitter release by reducing calcium ion currents and increasing potassium ion conductance. Plays a role in the perception of pain. Plays a role in mediating reduced physical activity upon treatment with synthetic opioids. Plays a role in the regulation of salivation in response to synthetic opioids. May play a role in arousal and regulation of autonomic and neuroendocrine functions. This Rattus norvegicus (Rat) protein is Kappa-type opioid receptor (Oprk1).